The sequence spans 157 residues: SsrA-binding protein (157 aa).

Positions 126–157 (GLGKGKQAHDKREAVKERDWQRDRARLMRDRG) are disordered. A compositionally biased stretch (basic and acidic residues) spans 132–157 (QAHDKREAVKERDWQRDRARLMRDRG).

This sequence belongs to the SmpB family.

The protein localises to the cytoplasm. Required for rescue of stalled ribosomes mediated by trans-translation. Binds to transfer-messenger RNA (tmRNA), required for stable association of tmRNA with ribosomes. tmRNA and SmpB together mimic tRNA shape, replacing the anticodon stem-loop with SmpB. tmRNA is encoded by the ssrA gene; the 2 termini fold to resemble tRNA(Ala) and it encodes a 'tag peptide', a short internal open reading frame. During trans-translation Ala-aminoacylated tmRNA acts like a tRNA, entering the A-site of stalled ribosomes, displacing the stalled mRNA. The ribosome then switches to translate the ORF on the tmRNA; the nascent peptide is terminated with the 'tag peptide' encoded by the tmRNA and targeted for degradation. The ribosome is freed to recommence translation, which seems to be the essential function of trans-translation. This chain is SsrA-binding protein, found in Methylobacterium radiotolerans (strain ATCC 27329 / DSM 1819 / JCM 2831 / NBRC 15690 / NCIMB 10815 / 0-1).